Consider the following 96-residue polypeptide: Ribonuclease P protein component 1 (96 aa).

This sequence belongs to the eukaryotic/archaeal RNase P protein component 1 family. Consists of a catalytic RNA component and at least 4-5 protein subunits.

It localises to the cytoplasm. It carries out the reaction Endonucleolytic cleavage of RNA, removing 5'-extranucleotides from tRNA precursor.. Its function is as follows. Part of ribonuclease P, a protein complex that generates mature tRNA molecules by cleaving their 5'-ends. The chain is Ribonuclease P protein component 1 from Methanococcus aeolicus (strain ATCC BAA-1280 / DSM 17508 / OCM 812 / Nankai-3).